We begin with the raw amino-acid sequence, 187 residues long: UPF0340 protein stu1894 (187 aa).

It belongs to the UPF0340 family.

The chain is UPF0340 protein stu1894 from Streptococcus thermophilus (strain ATCC BAA-250 / LMG 18311).